A 524-amino-acid polypeptide reads, in one-letter code: Translation initiation factor eIF2B subunit delta (524 aa).

Residues 1–155 form a disordered region; it reads MAAVAVAVRE…EHTPADDPTL (155 aa). A2 carries the N-acetylalanine modification. 2 stretches are compositionally biased toward basic and acidic residues: residues 8–20 and 31–40; these read VREE…KTEL and LTQEEKLQLR. Residue S12 is modified to Phosphoserine. The segment covering 41 to 51 has biased composition (basic residues); that stretch reads KEKKQQKKKRK. Phosphothreonine is present on T86. Positions 96–121 are enriched in basic and acidic residues; the sequence is SKAELRAERRAKQEAERALKQARKGE. Polar residues predominate over residues 130–140; sequence CPSTAGETTSG. The may bind the chemical integrated stress response (ISR) inhibitor ISRIB stretch occupies residues 171-180; it reads RKDYGSKVSL.

The protein belongs to the eIF-2B alpha/beta/delta subunits family. In terms of assembly, component of the translation initiation factor 2B (eIF2B) complex which is a heterodecamer of two sets of five different subunits: alpha, beta, gamma, delta and epsilon. Subunits alpha, beta and delta comprise a regulatory subcomplex and subunits epsilon and gamma comprise a catalytic subcomplex. Within the complex, the hexameric regulatory complex resides at the center, with the two heterodimeric catalytic subcomplexes bound on opposite sides.

It is found in the cytoplasm. Its subcellular location is the cytosol. With respect to regulation, activated by the chemical integrated stress response (ISR) inhibitor ISRIB which stimulates guanine nucleotide exchange factor activity for both phosphorylated and unphosphorylated eIF2. Its function is as follows. Acts as a component of the translation initiation factor 2B (eIF2B) complex, which catalyzes the exchange of GDP for GTP on eukaryotic initiation factor 2 (eIF2) gamma subunit. Its guanine nucleotide exchange factor activity is repressed when bound to eIF2 complex phosphorylated on the alpha subunit, thereby limiting the amount of methionyl-initiator methionine tRNA available to the ribosome and consequently global translation is repressed. This Mus musculus (Mouse) protein is Translation initiation factor eIF2B subunit delta (Eif2b4).